Reading from the N-terminus, the 256-residue chain is H-2 class II histocompatibility antigen, A-K alpha chain (256 aa).

The N-terminal stretch at 1 to 23 (MPRSRALILGVLALTTMLSLCGG) is a signal peptide. Residues 24-111 (EDDIEADHVG…KRSNSTPATN (88 aa)) form an alpha-1 region. Residues 24 to 218 (EDDIEADHVG…IPAPMSELTE (195 aa)) are Extracellular-facing. Asn105 and Asn145 each carry an N-linked (GlcNAc...) asparagine glycan. An alpha-2 region spans residues 112–205 (EAPQATVFPK…GLEEPVLKHW (94 aa)). The 93-residue stretch at 114 to 206 (PQATVFPKSP…LEEPVLKHWE (93 aa)) folds into the Ig-like C1-type domain. Cysteines 134 and 190 form a disulfide. Residues 206–218 (EPEIPAPMSELTE) are connecting peptide. A helical membrane pass occupies residues 219-241 (TVVCALGLSVGLVGIVVGTIFII). At 242-256 (QGLRSGGTSRHPGPL) the chain is on the cytoplasmic side.

It belongs to the MHC class II family.

It localises to the membrane. The chain is H-2 class II histocompatibility antigen, A-K alpha chain (H2-Aa) from Mus musculus (Mouse).